A 579-amino-acid polypeptide reads, in one-letter code: Laccase-24 (579 aa).

An N-terminal signal peptide occupies residues 1 to 23 (MARSWSLLLLPFALALVASVAQA). Plastocyanin-like domains lie at 31–148 (NVGN…PRGG) and 159–322 (EEVV…YGGG). N-linked (GlcNAc...) asparagine glycosylation is found at Asn34 and Asn78. The Cu cation site is built by His82 and His84. Residues Asn110 and Asn116 are each glycosylated (N-linked (GlcNAc...) asparagine). Cu cation-binding residues include His127 and His129. N-linked (GlcNAc...) asparagine glycosylation is found at Asn204, Asn209, Asn219, Asn241, Asn312, Asn337, Asn348, Asn398, Asn405, Asn444, and Asn462. In terms of domain architecture, Plastocyanin-like 3 spans 425–563 (DFPDTPPIVF…GMVFEVQNGP (139 aa)). Cu cation-binding residues include His480, His483, and His485. Residue Asn500 is glycosylated (N-linked (GlcNAc...) asparagine). Residues His542, Cys543, His544, and His548 each contribute to the Cu cation site.

The protein belongs to the multicopper oxidase family. Cu cation is required as a cofactor.

Its subcellular location is the secreted. It is found in the extracellular space. The protein resides in the apoplast. The catalysed reaction is 4 hydroquinone + O2 = 4 benzosemiquinone + 2 H2O. Lignin degradation and detoxification of lignin-derived products. In Oryza sativa subsp. japonica (Rice), this protein is Laccase-24 (LAC24).